Consider the following 199-residue polypeptide: Ribonuclease HII (199 aa).

One can recognise an RNase H type-2 domain in the interval 10 to 199; sequence RIEAGCDEAG…LLPEQLTLGF (190 aa). Residues Asp-16, Glu-17, and Asp-108 each coordinate a divalent metal cation.

Belongs to the RNase HII family. Requires Mn(2+) as cofactor. Mg(2+) serves as cofactor.

The protein localises to the cytoplasm. It catalyses the reaction Endonucleolytic cleavage to 5'-phosphomonoester.. Functionally, endonuclease that specifically degrades the RNA of RNA-DNA hybrids. This is Ribonuclease HII from Parabacteroides distasonis (strain ATCC 8503 / DSM 20701 / CIP 104284 / JCM 5825 / NCTC 11152).